We begin with the raw amino-acid sequence, 1358 residues long: DNA-directed RNA polymerase subunit beta (1358 aa).

It belongs to the RNA polymerase beta chain family. The RNAP catalytic core consists of 2 alpha, 1 beta, 1 beta' and 1 omega subunit. When a sigma factor is associated with the core the holoenzyme is formed, which can initiate transcription.

It catalyses the reaction RNA(n) + a ribonucleoside 5'-triphosphate = RNA(n+1) + diphosphate. In terms of biological role, DNA-dependent RNA polymerase catalyzes the transcription of DNA into RNA using the four ribonucleoside triphosphates as substrates. The sequence is that of DNA-directed RNA polymerase subunit beta from Francisella tularensis subsp. holarctica (strain OSU18).